The sequence spans 335 residues: Glycerol-3-phosphate dehydrogenase [NAD(P)+] (335 aa).

Residues Ser-15, Tyr-16, His-36, and Lys-110 each contribute to the NADPH site. The sn-glycerol 3-phosphate site is built by Lys-110, Gly-139, and Thr-141. Residue Ala-143 coordinates NADPH. Residues Lys-195, Asp-248, Ser-258, Arg-259, and Asn-260 each coordinate sn-glycerol 3-phosphate. The Proton acceptor role is filled by Lys-195. Residue Arg-259 participates in NADPH binding. The NADPH site is built by Val-283 and Glu-285.

It belongs to the NAD-dependent glycerol-3-phosphate dehydrogenase family.

It is found in the cytoplasm. It catalyses the reaction sn-glycerol 3-phosphate + NAD(+) = dihydroxyacetone phosphate + NADH + H(+). It carries out the reaction sn-glycerol 3-phosphate + NADP(+) = dihydroxyacetone phosphate + NADPH + H(+). It participates in membrane lipid metabolism; glycerophospholipid metabolism. Functionally, catalyzes the reduction of the glycolytic intermediate dihydroxyacetone phosphate (DHAP) to sn-glycerol 3-phosphate (G3P), the key precursor for phospholipid synthesis. The polypeptide is Glycerol-3-phosphate dehydrogenase [NAD(P)+] (Mannheimia succiniciproducens (strain KCTC 0769BP / MBEL55E)).